The following is a 406-amino-acid chain: Imidazolonepropionase (406 aa).

Positions 74 and 76 each coordinate Fe(3+). Residues histidine 74 and histidine 76 each contribute to the Zn(2+) site. 4-imidazolone-5-propanoate-binding residues include arginine 83, tyrosine 146, and histidine 179. Residue tyrosine 146 participates in N-formimidoyl-L-glutamate binding. Histidine 240 is a binding site for Fe(3+). Residue histidine 240 participates in Zn(2+) binding. Glutamate 243 lines the 4-imidazolone-5-propanoate pocket. A Fe(3+)-binding site is contributed by aspartate 314. A Zn(2+)-binding site is contributed by aspartate 314. Asparagine 316 and glycine 318 together coordinate N-formimidoyl-L-glutamate. Residue serine 319 participates in 4-imidazolone-5-propanoate binding.

The protein belongs to the metallo-dependent hydrolases superfamily. HutI family. It depends on Zn(2+) as a cofactor. The cofactor is Fe(3+).

The protein resides in the cytoplasm. The catalysed reaction is 4-imidazolone-5-propanoate + H2O = N-formimidoyl-L-glutamate. The protein operates within amino-acid degradation; L-histidine degradation into L-glutamate; N-formimidoyl-L-glutamate from L-histidine: step 3/3. Its function is as follows. Catalyzes the hydrolytic cleavage of the carbon-nitrogen bond in imidazolone-5-propanoate to yield N-formimidoyl-L-glutamate. It is the third step in the universal histidine degradation pathway. The sequence is that of Imidazolonepropionase from Kosmotoga olearia (strain ATCC BAA-1733 / DSM 21960 / TBF 19.5.1).